The sequence spans 259 residues: uncharacterized protein (259 aa).

This is an uncharacterized protein from Schizosaccharomyces pombe (strain 972 / ATCC 24843) (Fission yeast).